The sequence spans 343 residues: Thymidine kinase (343 aa).

Residue 27-34 (GAYGIGKS) participates in ATP binding. Residue Glu56 is the Proton acceptor of the active site. Residues Tyr74 and Gln98 each contribute to the substrate site. An ATP-binding site is contributed by Arg188. Arg194 is a substrate binding site.

The protein belongs to the herpesviridae thymidine kinase family. As to quaternary structure, homodimer.

The enzyme catalyses thymidine + ATP = dTMP + ADP + H(+). In terms of biological role, catalyzes the transfer of the gamma-phospho group of ATP to thymidine to generate dTMP in the salvage pathway of pyrimidine synthesis. The dTMP serves as a substrate for DNA polymerase during viral DNA replication. Allows the virus to be reactivated and to grow in non-proliferative cells lacking a high concentration of phosphorylated nucleic acid precursors. The chain is Thymidine kinase from Felidae (cat family).